The primary structure comprises 453 residues: tRNA(Ile)-lysidine synthase (453 aa).

Position 27–32 (27–32) interacts with ATP; sequence SGGSDS.

It belongs to the tRNA(Ile)-lysidine synthase family.

Its subcellular location is the cytoplasm. It catalyses the reaction cytidine(34) in tRNA(Ile2) + L-lysine + ATP = lysidine(34) in tRNA(Ile2) + AMP + diphosphate + H(+). Its function is as follows. Ligates lysine onto the cytidine present at position 34 of the AUA codon-specific tRNA(Ile) that contains the anticodon CAU, in an ATP-dependent manner. Cytidine is converted to lysidine, thus changing the amino acid specificity of the tRNA from methionine to isoleucine. This Rhizobium meliloti (strain 1021) (Ensifer meliloti) protein is tRNA(Ile)-lysidine synthase.